Reading from the N-terminus, the 446-residue chain is Phosphoglucosamine mutase (446 aa).

The active-site Phosphoserine intermediate is the S102. Mg(2+) is bound by residues S102, D241, D243, and D245. Residue S102 is modified to Phosphoserine.

This sequence belongs to the phosphohexose mutase family. The cofactor is Mg(2+). In terms of processing, activated by phosphorylation.

The catalysed reaction is alpha-D-glucosamine 1-phosphate = D-glucosamine 6-phosphate. Functionally, catalyzes the conversion of glucosamine-6-phosphate to glucosamine-1-phosphate. This is Phosphoglucosamine mutase from Yersinia enterocolitica serotype O:8 / biotype 1B (strain NCTC 13174 / 8081).